Reading from the N-terminus, the 417-residue chain is Gamma-glutamyl phosphate reductase (417 aa).

Belongs to the gamma-glutamyl phosphate reductase family.

The protein localises to the cytoplasm. The catalysed reaction is L-glutamate 5-semialdehyde + phosphate + NADP(+) = L-glutamyl 5-phosphate + NADPH + H(+). The protein operates within amino-acid biosynthesis; L-proline biosynthesis; L-glutamate 5-semialdehyde from L-glutamate: step 2/2. In terms of biological role, catalyzes the NADPH-dependent reduction of L-glutamate 5-phosphate into L-glutamate 5-semialdehyde and phosphate. The product spontaneously undergoes cyclization to form 1-pyrroline-5-carboxylate. The polypeptide is Gamma-glutamyl phosphate reductase (Enterobacter sp. (strain 638)).